We begin with the raw amino-acid sequence, 210 residues long: Uridine kinase (210 aa).

12–19 (GGSGGGKT) serves as a coordination point for ATP.

The protein belongs to the uridine kinase family.

The protein resides in the cytoplasm. The enzyme catalyses uridine + ATP = UMP + ADP + H(+). The catalysed reaction is cytidine + ATP = CMP + ADP + H(+). Its pathway is pyrimidine metabolism; CTP biosynthesis via salvage pathway; CTP from cytidine: step 1/3. It participates in pyrimidine metabolism; UMP biosynthesis via salvage pathway; UMP from uridine: step 1/1. This is Uridine kinase from Streptococcus uberis (strain ATCC BAA-854 / 0140J).